Consider the following 65-residue polypeptide: UPF0434 protein BQ10150 (65 aa).

It belongs to the UPF0434 family.

The sequence is that of UPF0434 protein BQ10150 from Bartonella quintana (strain Toulouse) (Rochalimaea quintana).